A 305-amino-acid polypeptide reads, in one-letter code: Dihydroorotate dehydrogenase B (NAD(+)), catalytic subunit (305 aa).

FMN is bound by residues Ser-23 and 47–48 (KG). Residues Lys-47 and 71–75 (NAIGL) each bind substrate. Residues Asn-101 and Asn-129 each contribute to the FMN site. Residue Asn-129 participates in substrate binding. Cys-132 serves as the catalytic Nucleophile. FMN-binding residues include Lys-167 and Ile-193. Substrate is bound at residue 194–195 (NT). Residues Gly-219, 245-246 (GG), and 267-268 (GT) each bind FMN.

This sequence belongs to the dihydroorotate dehydrogenase family. Type 1 subfamily. In terms of assembly, heterotetramer of 2 PyrK and 2 PyrD type B subunits. FMN serves as cofactor.

The protein resides in the cytoplasm. It carries out the reaction (S)-dihydroorotate + NAD(+) = orotate + NADH + H(+). Its pathway is pyrimidine metabolism; UMP biosynthesis via de novo pathway; orotate from (S)-dihydroorotate (NAD(+) route): step 1/1. Its function is as follows. Catalyzes the conversion of dihydroorotate to orotate with NAD(+) as electron acceptor. This chain is Dihydroorotate dehydrogenase B (NAD(+)), catalytic subunit (pyrD), found in Geobacter sp. (strain M21).